We begin with the raw amino-acid sequence, 158 residues long: Transcription elongation factor GreA (158 aa).

Positions 49 to 73 (QAAREQQGFIEGRIKEIEAKLANAQ) form a coiled coil.

It belongs to the GreA/GreB family.

Necessary for efficient RNA polymerase transcription elongation past template-encoded arresting sites. The arresting sites in DNA have the property of trapping a certain fraction of elongating RNA polymerases that pass through, resulting in locked ternary complexes. Cleavage of the nascent transcript by cleavage factors such as GreA or GreB allows the resumption of elongation from the new 3'terminus. GreA releases sequences of 2 to 3 nucleotides. The polypeptide is Transcription elongation factor GreA (Methylococcus capsulatus (strain ATCC 33009 / NCIMB 11132 / Bath)).